Consider the following 365-residue polypeptide: Phospho-N-acetylmuramoyl-pentapeptide-transferase (365 aa).

Transmembrane regions (helical) follow at residues tyrosine 22 to glycine 42, threonine 74 to leucine 94, threonine 95 to phenylalanine 115, lysine 134 to serine 154, serine 168 to glycine 188, glycine 201 to glutamate 221, leucine 240 to phenylalanine 260, valine 267 to methionine 287, leucine 292 to valine 312, and lysine 342 to isoleucine 362.

The protein belongs to the glycosyltransferase 4 family. MraY subfamily. It depends on Mg(2+) as a cofactor.

The protein resides in the cell inner membrane. It carries out the reaction UDP-N-acetyl-alpha-D-muramoyl-L-alanyl-gamma-D-glutamyl-meso-2,6-diaminopimeloyl-D-alanyl-D-alanine + di-trans,octa-cis-undecaprenyl phosphate = di-trans,octa-cis-undecaprenyl diphospho-N-acetyl-alpha-D-muramoyl-L-alanyl-D-glutamyl-meso-2,6-diaminopimeloyl-D-alanyl-D-alanine + UMP. Its pathway is cell wall biogenesis; peptidoglycan biosynthesis. Its function is as follows. Catalyzes the initial step of the lipid cycle reactions in the biosynthesis of the cell wall peptidoglycan: transfers peptidoglycan precursor phospho-MurNAc-pentapeptide from UDP-MurNAc-pentapeptide onto the lipid carrier undecaprenyl phosphate, yielding undecaprenyl-pyrophosphoryl-MurNAc-pentapeptide, known as lipid I. The chain is Phospho-N-acetylmuramoyl-pentapeptide-transferase from Francisella tularensis subsp. novicida (strain U112).